The primary structure comprises 103 residues: Large ribosomal subunit protein bL21 (103 aa).

Belongs to the bacterial ribosomal protein bL21 family. Part of the 50S ribosomal subunit. Contacts protein L20.

In terms of biological role, this protein binds to 23S rRNA in the presence of protein L20. This is Large ribosomal subunit protein bL21 from Hahella chejuensis (strain KCTC 2396).